The primary structure comprises 481 residues: U6 small nuclear RNA (adenine-(43)-N(6))-methyltransferase (481 aa).

5 residues coordinate S-adenosyl-L-methionine: Lys-82, Gly-108, Asp-131, Thr-164, and Asn-184.

This sequence belongs to the methyltransferase superfamily. METTL16/RlmF family. In terms of assembly, self-associates. Interacts with dlc-1; the interaction is direct, and is required for nuclear localization of mett-10.

Its subcellular location is the nucleus. The enzyme catalyses an adenosine in mRNA + S-adenosyl-L-methionine = an N(6)-methyladenosine in mRNA + S-adenosyl-L-homocysteine + H(+). The catalysed reaction is adenosine in U6 snRNA + S-adenosyl-L-methionine = N(6)-methyladenosine in U6 snRNA + S-adenosyl-L-homocysteine + H(+). RNA N6-methyltransferase that methylates adenosine residues at the N(6) position of a subset of RNAs and is involved in S-adenosyl-L-methionine homeostasis by regulating splicing of S-adenosylmethionine synthase transcripts (sams-3, sams-4 and sams-5). Able to N6-methylate a subset of mRNAs containing the 5'UACAGAAAC-3' nonamer sequence. Plays a key role in S-adenosyl-L-methionine homeostasis: under rich-diet conditions, catalyzes N6-methylation of S-adenosylmethionine synthase mRNAs (sams-3, sams-4 and sams-5), directly inhibiting splicing and protein production of S-adenosylmethionine synthase. In addition to mRNAs, also able to mediate N6-methylation of U6 small nuclear RNA (U6 snRNA). Required for gamete production, inhibiting germ cell proliferative fate and ensuring germ cell meiotic development. Also promotes progression of the mitotic cell cycle in those germ cells that continue to proliferate. Plays a role in the development of the vulva, somatic gonad and embryo. In Caenorhabditis briggsae, this protein is U6 small nuclear RNA (adenine-(43)-N(6))-methyltransferase.